The following is a 133-amino-acid chain: ATP synthase epsilon chain, chloroplastic (133 aa).

It belongs to the ATPase epsilon chain family. In terms of assembly, F-type ATPases have 2 components, CF(1) - the catalytic core - and CF(0) - the membrane proton channel. CF(1) has five subunits: alpha(3), beta(3), gamma(1), delta(1), epsilon(1). CF(0) has three main subunits: a, b and c.

Its subcellular location is the plastid. The protein resides in the chloroplast thylakoid membrane. In terms of biological role, produces ATP from ADP in the presence of a proton gradient across the membrane. The protein is ATP synthase epsilon chain, chloroplastic of Mesostigma viride (Green alga).